The primary structure comprises 309 residues: Porphobilinogen deaminase (309 aa).

Residue cysteine 242 is modified to S-(dipyrrolylmethanemethyl)cysteine.

This sequence belongs to the HMBS family. In terms of assembly, monomer. Dipyrromethane serves as cofactor.

It carries out the reaction 4 porphobilinogen + H2O = hydroxymethylbilane + 4 NH4(+). It participates in porphyrin-containing compound metabolism; protoporphyrin-IX biosynthesis; coproporphyrinogen-III from 5-aminolevulinate: step 2/4. Functionally, tetrapolymerization of the monopyrrole PBG into the hydroxymethylbilane pre-uroporphyrinogen in several discrete steps. This is Porphobilinogen deaminase from Syntrophobacter fumaroxidans (strain DSM 10017 / MPOB).